We begin with the raw amino-acid sequence, 105 residues long: Large ribosomal subunit protein bL21 (105 aa).

This sequence belongs to the bacterial ribosomal protein bL21 family. As to quaternary structure, part of the 50S ribosomal subunit. Contacts protein L20.

This protein binds to 23S rRNA in the presence of protein L20. This is Large ribosomal subunit protein bL21 from Rickettsia africae (strain ESF-5).